Reading from the N-terminus, the 679-residue chain is MISASRAVAARLVGAAASRGPTAARHQDGWNGLSHEAFRIVSRRDYASEAIKGAVVGIDLGTTNSCVAVMEGKQAKVLENAEGARTTPSVVAFTADGERLVGMPAKRQAVTNPNNTFYATKRLIGRRYDDPEVQKDIKNVPFKIVRASNGDAWVEAHGKLYSPSQIGAFVLMKMKETAENYLGHTAKNAVITVPAYFNDSQRQATKDAGQISGLNVLRVINEPTAAALAYGLDKSEDKVIAVYDLGGGTFDISILEIQKGVFEVKSTNGDTFLGGEDFDQALLRHIVKEFKRETGVDLTKDNMALQRVREAAEKAKCELSSSVQTDINLPYLTMDSSGPKHLNMKLSRAQFEGIVTDLIRRTIAPCQKAMQDAEVSKSDIGEVILVGGMTRMPKVQQTVQDLFGRAPSKAVNPDEAVAIGAAIQGGVLAGDVTDVLLLDVTPLSLGIETLGGVFTKLINRNTTIPTKKSQVFSTAADGQTQVEIKVCQGEREMAGDNKLLGQFTLIGIPPAPRGVPQIEVTFDIDANGIVHVSAKDKGTGREQQIVIQSSGGLSKDDIENMVKNAEKYAEEDRRKKERVEAVNMAEGIIHDTETKMEEFKDQLPADECNKLKEEISKMRELLARKDSETGENIRQAASSLQQASLKLFEMAYKKMASEREGSGSSGTGEQKEDQKEEKQ.

The N-terminal 46 residues, 1-46 (MISASRAVAARLVGAAASRGPTAARHQDGWNGLSHEAFRIVSRRDY), are a transit peptide targeting the mitochondrion. The segment at 1-432 (MISASRAVAA…IQGGVLAGDV (432 aa)) is interaction with NFS1. ADP-binding residues include T63 and N64. Residues 63–431 (TNSCVAVMEG…AIQGGVLAGD (369 aa)) are nucleotide-binding domain (NBD). An N6-acetyllysine modification is found at K76. The residue at position 87 (T87) is a Phosphothreonine. K135 and K138 each carry N6-acetyllysine; alternate. N6-succinyllysine; alternate is present on residues K135 and K138. K143 carries the N6-acetyllysine modification. K206 carries the N6-acetyllysine; alternate modification. An N6-succinyllysine; alternate modification is found at K206. Residue K206 is modified to N6-malonyllysine; alternate. An N6-acetyllysine mark is found at K234 and K288. K300 carries the post-translational modification N6-acetyllysine; alternate. The residue at position 300 (K300) is an N6-succinyllysine; alternate. The ADP site is built by E313, K316, and S320. K368 carries the post-translational modification N6-succinyllysine. The ADP site is built by G388 and R391. The residue at position 394 (K394) is an N6-succinyllysine. S408 is subject to Phosphoserine. The tract at residues 432 to 441 (VTDVLLLDVT) is interdomain linker. The segment at 432-679 (VTDVLLLDVT…QKEDQKEEKQ (248 aa)) is interaction with FXN and ISCU. Residues 442–679 (PLSLGIETLG…QKEDQKEEKQ (238 aa)) form a substrate-binding domain (SBD) region. An Omega-N-methylarginine modification is found at R513. N6-acetyllysine; alternate occurs at positions 567 and 600. Residues K567 and K600 each carry the N6-succinyllysine; alternate modification. K610 carries the post-translational modification N6-succinyllysine. The residue at position 612 (K612) is an N6-acetyllysine. K646 is modified (N6-acetyllysine; alternate). The residue at position 646 (K646) is an N6-succinyllysine; alternate. The interval 656-679 (ASEREGSGSSGTGEQKEDQKEEKQ) is disordered. A compositionally biased stretch (basic and acidic residues) spans 669 to 679 (EQKEDQKEEKQ).

The protein belongs to the heat shock protein 70 family. As to quaternary structure, interacts strongly with the intermediate form of FXN and weakly with its mature form. Interacts with HSCB. Associates with the mitochondrial contact site and cristae organizing system (MICOS) complex, composed of at least MICOS10/MIC10, CHCHD3/MIC19, CHCHD6/MIC25, APOOL/MIC27, IMMT/MIC60, APOO/MIC23/MIC26 and QIL1/MIC13. This complex was also known under the names MINOS or MitOS complex. The MICOS complex associates with mitochondrial outer membrane proteins SAMM50, MTX1, MTX2 and DNAJC11, mitochondrial inner membrane protein TMEM11 and with HSPA9. Interacts with DNLZ, the interaction is required to prevent self-aggregation. Interacts with TESPA1. Interacts with PDPN. Interacts with NFU1, NFS1 and ISCU. Interacts with TP53; the interaction promotes TP53 degradation. Interacts (via SBD domain) with UBXN2A; the interaction with UBXN2A inhibits HSPA9/MOT-2 interaction with and degradation of TP53, thereby promotes TP53 translocation to the nucleus. Interacts with ITPR1 AND VDAC1; this interaction couples ITPR1 to VDAC1. Component of the TIM23 mitochondrial inner membrane pre-sequence translocase complex.

The protein resides in the mitochondrion. Its subcellular location is the nucleus. The protein localises to the nucleolus. It localises to the cytoplasm. It is found in the mitochondrion matrix. It carries out the reaction ATP + H2O = ADP + phosphate + H(+). With respect to regulation, the chaperone activity is regulated by ATP-induced allosteric coupling of the nucleotide-binding (NBD) and substrate-binding (SBD) domains. ATP binding in the nucleotide-binding pocket (NBP) leads to a conformational change in the NBD, which is transferred through the interdomain linker (IDL) to the substrate-binding domain (SBD). This elicits a reduced substrate affinity and a faster substrate exchange rate. Upon hydrolysis of ATP to ADP, the protein undergoes a conformational change that increases its affinity for substrate proteins. It cycles through repeated phases of ATP hydrolysis and nucleotide exchange, facilitating repeated cycles of substrate binding and release. Functions in collaboration with co-chaperones. Functions with the co-chaperone, DNLZ, to maintain solubility and regulate ATP hydrolysis. Nucleotide exchange factors, GRPEL1 and GRPEL2, accelerate nucleotide exchange. Functionally, mitochondrial chaperone that plays a key role in mitochondrial protein import, folding, and assembly. Plays an essential role in the protein quality control system, the correct folding of proteins, the re-folding of misfolded proteins, and the targeting of proteins for subsequent degradation. These processes are achieved through cycles of ATP binding, ATP hydrolysis, and ADP release, mediated by co-chaperones. In mitochondria, it associates with the TIM (translocase of the inner membrane) protein complex to assist in the import and folding of mitochondrial proteins. Plays an important role in mitochondrial iron-sulfur cluster (ISC) biogenesis, interacts with and stabilizes ISC cluster assembly proteins FXN, NFU1, NFS1 and ISCU. Regulates erythropoiesis via stabilization of ISC assembly. Regulates mitochondrial calcium-dependent apoptosis by coupling two calcium channels, ITPR1 and VDAC1, at the mitochondria-associated endoplasmic reticulum (ER) membrane to facilitate calcium transport from the ER lumen to the mitochondria intermembrane space, providing calcium for the downstream calcium channel MCU, which releases it into the mitochondrial matrix. Although primarily located in the mitochondria, it is also found in other cellular compartments. In the cytosol, it associates with proteins involved in signaling, apoptosis, or senescence. It may play a role in cell cycle regulation via its interaction with and promotion of degradation of TP53. May play a role in the control of cell proliferation and cellular aging. Protects against reactive oxygen species (ROS). Extracellular HSPA9 plays a cytoprotective role by preventing cell lysis following immune attack by the membrane attack complex by disrupting formation of the complex. The protein is Stress-70 protein, mitochondrial of Pongo abelii (Sumatran orangutan).